The chain runs to 127 residues: MKWQGKSARKPTGGRLVPARGKRKYELGREPAETLVGPIRVKKIRTRGGNQKLRLLKADVASVSDPVTGATKLVKIETVVDNPANRHYVRRNIITRGAVIRTEIGEARVLSRPGQDGVVNAVLLPKH.

Positions 1–24 (MKWQGKSARKPTGGRLVPARGKRK) are disordered.

The protein belongs to the eukaryotic ribosomal protein eS8 family. Part of the 30S ribosomal subunit.

In Methanothrix thermoacetophila (strain DSM 6194 / JCM 14653 / NBRC 101360 / PT) (Methanosaeta thermophila), this protein is Small ribosomal subunit protein eS8.